Consider the following 336-residue polypeptide: Glyceraldehyde-3-phosphate dehydrogenase (336 aa).

NAD(+)-binding positions include arginine 12 to isoleucine 13, aspartate 34, and methionine 79. D-glyceraldehyde 3-phosphate-binding positions include serine 150–threonine 152, threonine 181, threonine 210–glycine 211, and arginine 233. Residue cysteine 151 is the Nucleophile of the active site. An NAD(+)-binding site is contributed by asparagine 316.

The protein belongs to the glyceraldehyde-3-phosphate dehydrogenase family. As to quaternary structure, homotetramer.

It localises to the cytoplasm. It carries out the reaction D-glyceraldehyde 3-phosphate + phosphate + NAD(+) = (2R)-3-phospho-glyceroyl phosphate + NADH + H(+). Its pathway is carbohydrate degradation; glycolysis; pyruvate from D-glyceraldehyde 3-phosphate: step 1/5. The protein is Glyceraldehyde-3-phosphate dehydrogenase of Echinococcus multilocularis (Fox tapeworm).